Consider the following 688-residue polypeptide: Elongation factor G (688 aa).

A tr-type G domain is found at 8 to 282; that stretch reads EKTRNIGIIA…AVVDYLPAPC (275 aa). Residues 17 to 24, 81 to 85, and 135 to 138 each bind GTP; these read AHIDAGKT, DTPGH, and NKMD.

The protein belongs to the TRAFAC class translation factor GTPase superfamily. Classic translation factor GTPase family. EF-G/EF-2 subfamily.

The protein localises to the cytoplasm. Catalyzes the GTP-dependent ribosomal translocation step during translation elongation. During this step, the ribosome changes from the pre-translocational (PRE) to the post-translocational (POST) state as the newly formed A-site-bound peptidyl-tRNA and P-site-bound deacylated tRNA move to the P and E sites, respectively. Catalyzes the coordinated movement of the two tRNA molecules, the mRNA and conformational changes in the ribosome. The polypeptide is Elongation factor G (Aster yellows witches'-broom phytoplasma (strain AYWB)).